The primary structure comprises 254 residues: Protein N-terminal and lysine N-methyltransferase EFM7 (254 aa).

Residues W57, 84 to 86 (GAA), D106, W138, and S165 contribute to the S-adenosyl-L-methionine site.

The protein belongs to the class I-like SAM-binding methyltransferase superfamily. EFM7 family.

The protein localises to the cytoplasm. In terms of biological role, S-adenosyl-L-methionine-dependent protein methyltransferase that trimethylates the N-terminal glycine 'Gly-2' of elongation factor 1-alpha, before also catalyzing the mono- and dimethylation of 'Lys-3'. This Debaryomyces hansenii (strain ATCC 36239 / CBS 767 / BCRC 21394 / JCM 1990 / NBRC 0083 / IGC 2968) (Yeast) protein is Protein N-terminal and lysine N-methyltransferase EFM7.